A 450-amino-acid polypeptide reads, in one-letter code: Bifunctional protein GlmU (450 aa).

The interval 1–229 is pyrophosphorylase; that stretch reads MRRHAIILAA…VEEIMGVNDR (229 aa). UDP-N-acetyl-alpha-D-glucosamine-binding positions include 8 to 11, Lys-22, Gln-72, and 77 to 78; these read LAAG and GT. Asp-102 contacts Mg(2+). UDP-N-acetyl-alpha-D-glucosamine contacts are provided by Gly-139, Glu-154, and Asn-227. Asn-227 serves as a coordination point for Mg(2+). The segment at 230 to 250 is linker; the sequence is VMLSQAENAMQRRTNHYHMLN. The tract at residues 251-450 is N-acetyltransferase; the sequence is GVTIIDPDST…RQTTKEGYRK (200 aa). 2 residues coordinate UDP-N-acetyl-alpha-D-glucosamine: Arg-332 and Lys-350. The active-site Proton acceptor is His-362. Positions 365 and 376 each coordinate UDP-N-acetyl-alpha-D-glucosamine. Residues 385 to 386, Ala-422, and Arg-439 each bind acetyl-CoA; that span reads NY.

The protein in the N-terminal section; belongs to the N-acetylglucosamine-1-phosphate uridyltransferase family. It in the C-terminal section; belongs to the transferase hexapeptide repeat family. Homotrimer. The cofactor is Mg(2+).

It localises to the cytoplasm. The enzyme catalyses alpha-D-glucosamine 1-phosphate + acetyl-CoA = N-acetyl-alpha-D-glucosamine 1-phosphate + CoA + H(+). It carries out the reaction N-acetyl-alpha-D-glucosamine 1-phosphate + UTP + H(+) = UDP-N-acetyl-alpha-D-glucosamine + diphosphate. Its pathway is nucleotide-sugar biosynthesis; UDP-N-acetyl-alpha-D-glucosamine biosynthesis; N-acetyl-alpha-D-glucosamine 1-phosphate from alpha-D-glucosamine 6-phosphate (route II): step 2/2. The protein operates within nucleotide-sugar biosynthesis; UDP-N-acetyl-alpha-D-glucosamine biosynthesis; UDP-N-acetyl-alpha-D-glucosamine from N-acetyl-alpha-D-glucosamine 1-phosphate: step 1/1. It functions in the pathway bacterial outer membrane biogenesis; LPS lipid A biosynthesis. Catalyzes the last two sequential reactions in the de novo biosynthetic pathway for UDP-N-acetylglucosamine (UDP-GlcNAc). The C-terminal domain catalyzes the transfer of acetyl group from acetyl coenzyme A to glucosamine-1-phosphate (GlcN-1-P) to produce N-acetylglucosamine-1-phosphate (GlcNAc-1-P), which is converted into UDP-GlcNAc by the transfer of uridine 5-monophosphate (from uridine 5-triphosphate), a reaction catalyzed by the N-terminal domain. The chain is Bifunctional protein GlmU from Staphylococcus aureus (strain MRSA252).